Consider the following 326-residue polypeptide: Fructose-1,6-bisphosphatase class 1 2 (326 aa).

The Mg(2+) site is built by glutamate 84, aspartate 103, leucine 105, and aspartate 106. Substrate is bound by residues 106-109 (DGSS), asparagine 198, and lysine 262. Glutamate 268 lines the Mg(2+) pocket.

Belongs to the FBPase class 1 family. In terms of assembly, homotetramer. Requires Mg(2+) as cofactor.

It localises to the cytoplasm. The enzyme catalyses beta-D-fructose 1,6-bisphosphate + H2O = beta-D-fructose 6-phosphate + phosphate. It participates in carbohydrate biosynthesis; gluconeogenesis. In Pseudoalteromonas translucida (strain TAC 125), this protein is Fructose-1,6-bisphosphatase class 1 2.